The following is a 347-amino-acid chain: Quinolinate synthase (347 aa).

Positions 47 and 68 each coordinate iminosuccinate. Cys113 is a binding site for [4Fe-4S] cluster. Iminosuccinate-binding positions include 139 to 141 and Ser156; that span reads YAN. Cys200 contributes to the [4Fe-4S] cluster binding site. Residues 226-228 and Thr243 each bind iminosuccinate; that span reads HPE. Cys297 contacts [4Fe-4S] cluster.

The protein belongs to the quinolinate synthase family. Type 1 subfamily. The cofactor is [4Fe-4S] cluster.

Its subcellular location is the cytoplasm. It carries out the reaction iminosuccinate + dihydroxyacetone phosphate = quinolinate + phosphate + 2 H2O + H(+). It functions in the pathway cofactor biosynthesis; NAD(+) biosynthesis; quinolinate from iminoaspartate: step 1/1. Catalyzes the condensation of iminoaspartate with dihydroxyacetone phosphate to form quinolinate. The protein is Quinolinate synthase of Salmonella gallinarum (strain 287/91 / NCTC 13346).